Here is a 309-residue protein sequence, read N- to C-terminus: HTH-type transcriptional activator AaeR (309 aa).

The region spanning 1 to 59 (MERLKRMSVFAKVVEFGSFTAAARQLQMSVSSISQTVSKLEDELQVKLLNRSTRSIGLT) is the HTH lysR-type domain. The segment at residues 19 to 38 (FTAAARQLQMSVSSISQTVS) is a DNA-binding region (H-T-H motif).

This sequence belongs to the LysR transcriptional regulatory family.

With respect to regulation, activity is regulated by p-hydroxybenzoic acid. Transcriptional regulator that activates expression of the aaeXAB operon, which is involved in the efflux of aromatic carboxylic acids such as p-hydroxybenzoic acid (pHBA). In the presence of the effector pHBA, acts by binding to a single target within the aaeXAB-aaeR intergenic region. In the absence of pHBA, binds more than 50 sites along the E.coli K12 genome, including genes related to biofilm formation and several genes involved in stress response, suggesting that it might play a role in quorum sensing in the absence of pHBA. This Escherichia coli (strain K12) protein is HTH-type transcriptional activator AaeR.